A 451-amino-acid chain; its full sequence is Lipase member H (451 aa).

A signal peptide spans 1–16 (MLRLCFLLSFMCLVKS). N66 carries an N-linked (GlcNAc...) asparagine glycan. S154 acts as the Nucleophile in catalysis. The Charge relay system role is filled by D178. A disulfide bridge links C233 with C246. H248 functions as the Charge relay system in the catalytic mechanism. Intrachain disulfides connect C270/C281, C284/C292, and C427/C446.

Belongs to the AB hydrolase superfamily. Lipase family. In terms of assembly, interacts with TTMP/C3orf52.

Its subcellular location is the secreted. The protein localises to the cell membrane. The catalysed reaction is 1-hexadecanoyl-2-(9Z-octadecenoyl)-sn-glycero-3-phosphate + H2O = 2-(9Z-octadecenoyl)-sn-glycero-3-phosphate + hexadecanoate + H(+). Functionally, hydrolyzes specifically phosphatidic acid (PA) to produce 2-acyl lysophosphatidic acid (LPA; a potent bioactive lipid mediator) and fatty acid. Does not hydrolyze other phospholipids, like phosphatidylserine (PS), phosphatidylcholine (PC) and phosphatidylethanolamine (PE) or triacylglycerol (TG). This is Lipase member H (Liph) from Rattus norvegicus (Rat).